A 182-amino-acid polypeptide reads, in one-letter code: Large ribosomal subunit protein uL10 (182 aa).

Belongs to the universal ribosomal protein uL10 family. Part of the ribosomal stalk of the 50S ribosomal subunit. The N-terminus interacts with L11 and the large rRNA to form the base of the stalk. The C-terminus forms an elongated spine to which L12 dimers bind in a sequential fashion forming a multimeric L10(L12)X complex.

Functionally, forms part of the ribosomal stalk, playing a central role in the interaction of the ribosome with GTP-bound translation factors. In Parafrankia sp. (strain EAN1pec), this protein is Large ribosomal subunit protein uL10.